The sequence spans 325 residues: Cytochrome c1, heme protein, mitochondrial (325 aa).

A mitochondrion-targeting transit peptide spans 1-84 (MAAAAASLRG…AMALHSAVSA (84 aa)). The Mitochondrial intermembrane portion of the chain corresponds to 85-281 (SDLELHPPSY…TFLRWASEPE (197 aa)). In terms of domain architecture, Cytochrome c spans 108-209 (TSIRRGFQVY…IVRARHGGED (102 aa)). Heme c is bound by residues C121, C124, and H125. S182 is subject to Phosphoserine. M244 serves as a coordination point for heme c. A helical membrane pass occupies residues 282-315 (HDHRKRMGLKMLMMMALLVPLVYTIKRHKWSVLK). Residues 316-325 (SRKLAYRPPK) are Mitochondrial matrix-facing.

Belongs to the cytochrome c family. As to quaternary structure, component of the ubiquinol-cytochrome c oxidoreductase (cytochrome b-c1 complex, complex III, CIII), a multisubunit enzyme composed of 11 subunits. The complex is composed of 3 respiratory subunits cytochrome b, cytochrome c1 and Rieske protein UQCRFS1, 2 core protein subunits UQCRC1/QCR1 and UQCRC2/QCR2, and 6 low-molecular weight protein subunits UQCRH/QCR6, UQCRB/QCR7, UQCRQ/QCR8, UQCR10/QCR9, UQCR11/QCR10 and subunit 9, the cleavage product of Rieske protein UQCRFS1. The complex exists as an obligatory dimer and forms supercomplexes (SCs) in the inner mitochondrial membrane with NADH-ubiquinone oxidoreductase (complex I, CI) and cytochrome c oxidase (complex IV, CIV), resulting in different assemblies (supercomplex SCI(1)III(2)IV(1) and megacomplex MCI(2)III(2)IV(2)). Interacts with FLVCR2; this interaction occurs in the absence of heme and is disrupted upon heme binding. The cofactor is heme c.

The protein resides in the mitochondrion inner membrane. The catalysed reaction is a quinol + 2 Fe(III)-[cytochrome c](out) = a quinone + 2 Fe(II)-[cytochrome c](out) + 2 H(+)(out). Component of the ubiquinol-cytochrome c oxidoreductase, a multisubunit transmembrane complex that is part of the mitochondrial electron transport chain which drives oxidative phosphorylation. The respiratory chain contains 3 multisubunit complexes succinate dehydrogenase (complex II, CII), ubiquinol-cytochrome c oxidoreductase (cytochrome b-c1 complex, complex III, CIII) and cytochrome c oxidase (complex IV, CIV), that cooperate to transfer electrons derived from NADH and succinate to molecular oxygen, creating an electrochemical gradient over the inner membrane that drives transmembrane transport and the ATP synthase. The cytochrome b-c1 complex catalyzes electron transfer from ubiquinol to cytochrome c, linking this redox reaction to translocation of protons across the mitochondrial inner membrane, with protons being carried across the membrane as hydrogens on the quinol. In the process called Q cycle, 2 protons are consumed from the matrix, 4 protons are released into the intermembrane space and 2 electrons are passed to cytochrome c. Cytochrome c1 is a catalytic core subunit containing a c-type heme. It transfers electrons from the [2Fe-2S] iron-sulfur cluster of the Rieske protein to cytochrome c. This Homo sapiens (Human) protein is Cytochrome c1, heme protein, mitochondrial (CYC1).